The sequence spans 568 residues: Urocanate hydratase (568 aa).

NAD(+) is bound by residues 58–59 (GG), glutamine 136, 182–184 (GMG), glutamate 202, arginine 207, 248–249 (NA), 269–273 (QTSAH), 279–280 (YL), and tyrosine 328. The active site involves cysteine 416. Glycine 498 provides a ligand contact to NAD(+).

It belongs to the urocanase family. The cofactor is NAD(+).

It is found in the cytoplasm. It carries out the reaction 4-imidazolone-5-propanoate = trans-urocanate + H2O. The protein operates within amino-acid degradation; L-histidine degradation into L-glutamate; N-formimidoyl-L-glutamate from L-histidine: step 2/3. Catalyzes the conversion of urocanate to 4-imidazolone-5-propionate. The polypeptide is Urocanate hydratase (Photobacterium profundum (strain SS9)).